The primary structure comprises 150 residues: Ribosome maturation factor RimP (150 aa).

This sequence belongs to the RimP family.

It localises to the cytoplasm. Its function is as follows. Required for maturation of 30S ribosomal subunits. The protein is Ribosome maturation factor RimP of Francisella philomiragia subsp. philomiragia (strain ATCC 25017 / CCUG 19701 / FSC 153 / O#319-036).